The primary structure comprises 462 residues: L-seryl-tRNA(Sec) selenium transferase (462 aa).

Position 292 is an N6-(pyridoxal phosphate)lysine (lysine 292).

It belongs to the SelA family. Pyridoxal 5'-phosphate serves as cofactor.

The protein resides in the cytoplasm. The catalysed reaction is L-seryl-tRNA(Sec) + selenophosphate + H(+) = L-selenocysteinyl-tRNA(Sec) + phosphate. Its pathway is aminoacyl-tRNA biosynthesis; selenocysteinyl-tRNA(Sec) biosynthesis; selenocysteinyl-tRNA(Sec) from L-seryl-tRNA(Sec) (bacterial route): step 1/1. Converts seryl-tRNA(Sec) to selenocysteinyl-tRNA(Sec) required for selenoprotein biosynthesis. The polypeptide is L-seryl-tRNA(Sec) selenium transferase (Geotalea daltonii (strain DSM 22248 / JCM 15807 / FRC-32) (Geobacter daltonii)).